Reading from the N-terminus, the 348-residue chain is Histidinol-phosphate aminotransferase (348 aa).

Lysine 207 bears the N6-(pyridoxal phosphate)lysine mark.

This sequence belongs to the class-II pyridoxal-phosphate-dependent aminotransferase family. Histidinol-phosphate aminotransferase subfamily. Homodimer. Pyridoxal 5'-phosphate serves as cofactor.

It catalyses the reaction L-histidinol phosphate + 2-oxoglutarate = 3-(imidazol-4-yl)-2-oxopropyl phosphate + L-glutamate. It functions in the pathway amino-acid biosynthesis; L-histidine biosynthesis; L-histidine from 5-phospho-alpha-D-ribose 1-diphosphate: step 7/9. The protein is Histidinol-phosphate aminotransferase of Rippkaea orientalis (strain PCC 8801 / RF-1) (Cyanothece sp. (strain PCC 8801)).